The primary structure comprises 483 residues: Keratin, type II cytoskeletal 7 (483 aa).

Ser2 bears the N-acetylserine mark. 3 positions are modified to phosphoserine: Ser2, Ser6, and Ser7. The head stretch occupies residues 2-107 (SVQFSSQTFS…DPQIQQVRKE (106 aa)). O-linked (GlcNAc) serine glycosylation is present at Ser12. The interval 14-37 (SAAFPRRGGQGRLSSVSSRAGSVS) is disordered. A Dimethylated arginine; alternate modification is found at Arg20. An Omega-N-methylarginine; alternate modification is found at Arg20. Residues 25–37 (RLSSVSSRAGSVS) are compositionally biased toward low complexity. Residues Ser63 and Ser88 each carry the phosphoserine modification. Positions 107–143 (EEREQIKTLNNKFASFIDKVRFLEQQNQMLETKWRLL) are coil 1A. One can recognise an IF rod domain in the interval 108–420 (EREQIKTLNN…KLLEGEESRL (313 aa)). Thr114 bears the Phosphothreonine mark. Residues 144–161 (QEQKSSKGSSLPAIFEAH) are linker 1. Lys147 is covalently cross-linked (Glycyl lysine isopeptide (Lys-Gly) (interchain with G-Cter in SUMO2)). The interval 162 to 253 (IANLRRQLDG…TLYEMELNEL (92 aa)) is coil 1B. An N6-acetyllysine modification is found at Lys196. The linker 12 stretch occupies residues 254 to 277 (QTQISDTSVVLSMDNSRSLDLDSI). A phosphoserine mark is found at Ser269 and Ser271. A coil 2 region spans residues 278–416 (ISEVKAQYED…ATYRKLLEGE (139 aa)). Residues Lys282 and Lys303 each participate in a glycyl lysine isopeptide (Lys-Gly) (interchain with G-Cter in SUMO2) cross-link. Thr306 is subject to Phosphothreonine. Glycyl lysine isopeptide (Lys-Gly) (interchain with G-Cter in SUMO2) cross-links involve residues Lys313 and Lys348. Residues 417–483 (ESRLSGDGVG…TSSSRRSVRN (67 aa)) form a tail region.

It belongs to the intermediate filament family. As to quaternary structure, heterotetramer of two type I and two type II keratins. Interacts with eukaryotic translation initiator factor 3 (eIF3) subunit EIF3S10. Interacts with GPER1. Post-translationally, arg-20 is dimethylated, probably to asymmetric dimethylarginine.

In terms of biological role, blocks interferon-dependent interphase and stimulates DNA synthesis in cells. This is Keratin, type II cytoskeletal 7 from Potorous tridactylus (Potoroo).